We begin with the raw amino-acid sequence, 517 residues long: MAPSTIGTNVAGDKYEYDPENWMAKGTSTLNNGNGTKGTLDVDLPERHPETGINVLVVGAGMGGLMTTLECWRKGHNIVGILERNDGPVYSGDIIVIQPSAVSVLRHWPDMMRDMEDEQVNAAVSYEQHTGRHIYGPTVPSFNELEHLASRKGPFVAPAQIREKFYRMLLRQVAKLGFKVQYGKRAVSYFEDIAAGKGGVVLESGEIQVADVVVAADGLRSTSEILIAGEHTPTKSSGMSIYRTAYPREMAMKDETVRKRWADTKEIWEYWLGPGMYIGVFFSEDVVSWGFTPRDTHGGATESWEPDTDPEDVVKELLRVPDWDPAIAALVRTAPKGAIVHWPLLWRNLRREWTSSGGHVVQLGDSAHSFVPTSGNGATQALEDAITLATCLQLGGAARNAPLATKIYNLLRYERVSCAQKMSFVNSQLKTETDWDGIWADPIKVRTRFPKWIHNHDPEDYAYAKYGQAFAHLVAGADFANENFPPGHHFVPWSIEEVYADIEAGKKVEALLDGDWS.

FAD is bound by residues valine 96 and arginine 162. Residues arginine 243 and tyrosine 270 contribute to the active site. FAD-binding residues include aspartate 365 and alanine 378.

This sequence belongs to the paxM FAD-dependent monooxygenase family. FAD is required as a cofactor.

The protein operates within secondary metabolite biosynthesis. Its function is as follows. FAD-dependent monooxygenase; part of the gene cluster that mediates the biosynthesis of the dimeric xanthones cryptosporioptides. The pathway begins with the synthesis of atrochrysone thioester by the polyketide synthase dmx-nrPKS. The atrochrysone carboxyl ACP thioesterase dmxR1 then breaks the thioester bond and releases the atrochrysone carboxylic acid from dmx-nrPKS. Atrochrysone carboxylic acid is decarboxylated by the decarboxylase dmxR15, and oxidized by the anthrone oxygenase dmxR16 to yield emodin. Emodin is then reduced to emodin hydroquinone by the oxidoreductase dmxR7. A-ring reduction by the short chain dehydrogenase dmxR18, dehydration by the scytalone dehydratase-like protein dmxR17 and probable spontaneous re-oxidation, results in overall deoxygenation to chrysophanol. Baeyer-Villiger oxidation by the Baeyer-Villiger monooxygenase (BVMO) dmxR6 then yields monodictylactone in equilibrium with monodictyphenone. In the case of the cryptosporioptides biosynthesis, monodictylactone is reduced at C-12 to an alcohol (by the short chain dehydrogenases dmxR12 or dmxR8) and hydroxylated at C-5 by dmxR9, yielding the electron-rich aromatic which could eliminate H(2)O to form the ortho-quinonemethide, followed by tautomerisation to paraquinone and complete the formal reduction to produce the 10-methylgroup. Conjugate addition of C-4a-OH to the resulting paraquinone by the monooxygenase dmxR10 then gives cyclohexadienone, which is then reduced at C-5 by the short chain dehydrogenase dmxR3 to give the dihydroxanthone. The 6,7-epoxide in the cryptosporioptides could be introduced by the cytochrome P450 monooxygenase dmxL3. The highly reducing PKS dmxL2 manufactures butyrate, which is further carboxylated by dmxL1 to form ethylmalonate. It is not yet clear whether the carboxylation occurs while the butyrate is attached to the ACP of dmxL2, but this unusual fungal metabolite could then be esterified to O-5 by the O-acetyltransferase dmxR13. Finally, dimerization performed by dmxR5 gives the observed dimers cryptosporioptides A, B and C as the final products of the pathway. The protein is FAD-dependent monooxygenase dmxR9 of Cryptosporiopsis sp. (strain 8999).